The following is a 35-amino-acid chain: Photosystem II reaction center protein Psb30 (35 aa).

Residues 7–27 (VFVQLALLALIVLAGPAVILL) traverse the membrane as a helical segment.

Belongs to the Psb30/Ycf12 family. As to quaternary structure, PSII is composed of 1 copy each of membrane proteins PsbA, PsbB, PsbC, PsbD, PsbE, PsbF, PsbH, PsbI, PsbJ, PsbK, PsbL, PsbM, PsbT, PsbX, PsbY, PsbZ, Psb30/Ycf12, peripheral proteins PsbO, CyanoQ (PsbQ), PsbU, PsbV and a large number of cofactors. It forms dimeric complexes.

Its subcellular location is the cellular thylakoid membrane. Functionally, a core subunit of photosystem II (PSII), probably helps stabilize the reaction center. The protein is Photosystem II reaction center protein Psb30 of Synechococcus sp. (strain JA-2-3B'a(2-13)) (Cyanobacteria bacterium Yellowstone B-Prime).